A 263-amino-acid chain; its full sequence is MRPGAPGPLWPLPWGALAWAVGFVSSMGSGNPAPGGVCWLQQGQEATCSLVLQTDVTRAECCASGNIDTAWSNLTHPGNKINLLGFLGLVHCLPCKDSCDGVECGPGKACRMLGGRPRCECAPDCSGLPARLQVCGSDGATYRDECELRAARCRGHPDLSVMYRGRCRKSCEHVVCPRPQSCVVDQTGSAHCVVCRAAPCPVPSSPGQELCGNNNVTYISSCHMRQATCFLGRSIGVRHAGSCAGTPEEPPGGESAEEEENFV.

An N-terminal signal peptide occupies residues 1 to 26 (MRPGAPGPLWPLPWGALAWAVGFVSS). The TB domain maps to 36–107 (GVCWLQQGQE…SCDGVECGPG (72 aa)). 13 cysteine pairs are disulfide-bonded: Cys38–Cys61, Cys48–Cys92, Cys62–Cys95, Cys99–Cys110, Cys104–Cys119, Cys121–Cys153, Cys125–Cys146, Cys135–Cys167, Cys171–Cys182, Cys176–Cys192, Cys195–Cys229, Cys200–Cys222, and Cys211–Cys243. N-linked (GlcNAc...) asparagine glycosylation occurs at Asn73. Residues 99-119 (CDGVECGPGKACRMLGGRPRC) enclose the Follistatin-like 1 domain. The Kazal-like 1 domain maps to 113-169 (LGGRPRCECAPDCSGLPARLQVCGSDGATYRDECELRAARCRGHPDLSVMYRGRCRK). The region spanning 170–193 (SCEHVVCPRPQSCVVDQTGSAHCV) is the Follistatin-like 2 domain. Residues 189–245 (SAHCVVCRAAPCPVPSSPGQELCGNNNVTYISSCHMRQATCFLGRSIGVRHAGSCAG) enclose the Kazal-like 2 domain. Asn215 carries an N-linked (GlcNAc...) asparagine glycan. A disordered region spans residues 242-263 (SCAGTPEEPPGGESAEEEENFV). At Ser255 the chain carries Phosphoserine; by FAM20C.

In terms of assembly, interacts with INHBA and INHBB. Interacts with FN1. Interacts with ADAM12. Isoform 2 interacts with MLLT10; the interaction enhances MLLT10 in vitro transcriptional activity and self-association. Interacts with MSTN. Expressed in a wide range of tissues.

It is found in the secreted. It localises to the nucleus. In terms of biological role, isoform 1 or the secreted form is a binding and antagonizing protein for members of the TGF-beta family, such as activin, BMP2 and MSTN. Inhibits activin A-, activin B-, BMP2- and MSDT-induced cellular signaling; more effective on activin A than on activin B. Involved in bone formation; inhibits osteoclast differentiation. Involved in hematopoiesis; involved in differentiation of hemopoietic progenitor cells, increases hematopoietic cell adhesion to fibronectin and seems to contribute to the adhesion of hematopoietic precursor cells to the bone marrow stroma. Isoform 2 or the nuclear form is probably involved in transcriptional regulation via interaction with MLLT10. The sequence is that of Follistatin-related protein 3 (FSTL3) from Homo sapiens (Human).